The sequence spans 130 residues: Con-Ins M1 (130 aa).

Residues 1–21 (MTTSSYFLLVALGLLLYVCQS) form the signal peptide. 4 disulfide bridges follow: Cys-29–Cys-107, Cys-41–Cys-110, Cys-53–Cys-123, and Cys-109–Cys-114. Position 34 is a 4-hydroxyproline; partial (Pro-34). Positions 59–92 (AHGGTNDARATTGRALSLSKRRGFLSMLKRRGKR) are cleaved as a propeptide — c peptide. Glu-118 carries the 4-carboxyglutamate; partial modification. Ser-129 is subject to Serine amide.

Belongs to the insulin family. As to quaternary structure, heterodimer of A and B chains; disulfide-linked. In terms of tissue distribution, expressed by the venom gland.

It is found in the secreted. In terms of biological role, this venom insulin facilitates prey capture by rapidly inducing hypoglycemic shock. Intraperitoneal injection of this peptide into zebrafish lowers blood glucose with the same potency than human insulin. In vivo, when applied to water, this peptide reduces overall locomotor activity of zebrafish larvae, observed as a significant decrease in the percentage of time spent swimming and movement frequency. This Conus marmoreus (Marble cone) protein is Con-Ins M1.